Reading from the N-terminus, the 96-residue chain is Large ribosomal subunit protein uL23 (96 aa).

Belongs to the universal ribosomal protein uL23 family. As to quaternary structure, part of the 50S ribosomal subunit. Contacts protein L29, and trigger factor when it is bound to the ribosome.

One of the early assembly proteins it binds 23S rRNA. One of the proteins that surrounds the polypeptide exit tunnel on the outside of the ribosome. Forms the main docking site for trigger factor binding to the ribosome. The chain is Large ribosomal subunit protein uL23 from Nitratidesulfovibrio vulgaris (strain DSM 19637 / Miyazaki F) (Desulfovibrio vulgaris).